A 345-amino-acid polypeptide reads, in one-letter code: Phosphoribosylformylglycinamidine cyclo-ligase (345 aa).

The protein belongs to the AIR synthase family.

The protein localises to the cytoplasm. The catalysed reaction is 2-formamido-N(1)-(5-O-phospho-beta-D-ribosyl)acetamidine + ATP = 5-amino-1-(5-phospho-beta-D-ribosyl)imidazole + ADP + phosphate + H(+). It functions in the pathway purine metabolism; IMP biosynthesis via de novo pathway; 5-amino-1-(5-phospho-D-ribosyl)imidazole from N(2)-formyl-N(1)-(5-phospho-D-ribosyl)glycinamide: step 2/2. In Bifidobacterium longum (strain DJO10A), this protein is Phosphoribosylformylglycinamidine cyclo-ligase.